A 796-amino-acid polypeptide reads, in one-letter code: Serine/threonine-protein kinase ATG1 (796 aa).

One can recognise a Protein kinase domain in the interval 9–304 (YVVGAEIGRG…FQEFFNDPVI (296 aa)). ATP-binding positions include 15–23 (IGRGSFANV) and Lys-38. The active-site Proton acceptor is Asp-155. Residues 360 to 370 (LEEEDEEEDQD) are compositionally biased toward acidic residues. Disordered stretches follow at residues 360 to 382 (LEEE…IQHM), 389 to 408 (LLNK…RREL), and 450 to 480 (PYTR…KVPI). Positions 389–403 (LLNKTTQKQTEVQSQ) are enriched in polar residues. Positions 453–470 (RRYSSSSRSSSTGSNQRR) are enriched in low complexity.

This sequence belongs to the protein kinase superfamily. Ser/Thr protein kinase family. APG1/unc-51/ULK1 subfamily. In terms of assembly, homodimer. Forms a ternary complex with ATG13 and ATG17.

Its subcellular location is the cytoplasm. It localises to the preautophagosomal structure membrane. The catalysed reaction is L-seryl-[protein] + ATP = O-phospho-L-seryl-[protein] + ADP + H(+). It catalyses the reaction L-threonyl-[protein] + ATP = O-phospho-L-threonyl-[protein] + ADP + H(+). Its function is as follows. Serine/threonine protein kinase involved in the cytoplasm to vacuole transport (Cvt) and found to be essential in autophagy, where it is required for the formation of autophagosomes. Involved in the clearance of protein aggregates which cannot be efficiently cleared by the proteasome. Required for selective autophagic degradation of the nucleus (nucleophagy) as well as for mitophagy which contributes to regulate mitochondrial quantity and quality by eliminating the mitochondria to a basal level to fulfill cellular energy requirements and preventing excess ROS production. Also involved in endoplasmic reticulum-specific autophagic process, in selective removal of ER-associated degradation (ERAD) substrates. Plays a key role in ATG9 and ATG23 cycling through the pre-autophagosomal structure and is necessary to promote ATG18 binding to ATG9 through phosphorylation of ATG9. Catalyzes phosphorylation of ATG4, decreasing the interaction between ATG4 and ATG8 and impairing deconjugation of PE-conjugated forms of ATG8. The sequence is that of Serine/threonine-protein kinase ATG1 from Komagataella pastoris (Yeast).